The chain runs to 103 residues: Large ribosomal subunit protein uL24 (103 aa).

Belongs to the universal ribosomal protein uL24 family. As to quaternary structure, part of the 50S ribosomal subunit.

In terms of biological role, one of two assembly initiator proteins, it binds directly to the 5'-end of the 23S rRNA, where it nucleates assembly of the 50S subunit. Its function is as follows. One of the proteins that surrounds the polypeptide exit tunnel on the outside of the subunit. This Sinorhizobium fredii (strain NBRC 101917 / NGR234) protein is Large ribosomal subunit protein uL24.